Consider the following 1297-residue polypeptide: Insulin receptor-related protein (1297 aa).

Positions 1-26 are cleaved as a signal peptide; sequence MAVPSLWPWGACLPVIFLSLGFGLDT. Asparagine 47 carries an N-linked (GlcNAc...) asparagine glycan. 9 disulfides stabilise this stretch: cysteine 214–cysteine 222, cysteine 216–cysteine 228, cysteine 229–cysteine 237, cysteine 233–cysteine 246, cysteine 249–cysteine 258, cysteine 262–cysteine 274, cysteine 280–cysteine 300, cysteine 304–cysteine 317, and cysteine 320–cysteine 324. Asparagine 311 is a glycosylation site (N-linked (GlcNAc...) asparagine). 5 N-linked (GlcNAc...) asparagine glycosylation sites follow: asparagine 411, asparagine 492, asparagine 528, asparagine 616, and asparagine 634. Fibronectin type-III domains lie at 483–603 and 607–707; these read QTRT…TLPA and VPQD…AQEA. The cysteines at positions 657 and 864 are disulfide-linked. Disordered stretches follow at residues 666–687 and 732–758; these read SNNDPRFDGEDGDPEAEMESDC and SINKSPQRDSGRHRRAAGPLRLGGNSS. Residues 675–685 show a composition bias toward acidic residues; sequence EDGDPEAEMES. Topologically, residues 747–921 are extracellular; the sequence is AAGPLRLGGN…PEEEDAGGLH (175 aa). Residues asparagine 756, asparagine 885, and asparagine 898 are each glycosylated (N-linked (GlcNAc...) asparagine). The Fibronectin type-III 3 domain occupies 818–913; the sequence is IPGKVAWEAS…SVAFYILGPE (96 aa). A helical membrane pass occupies residues 922–943; it reads VLLTATPVGLTLLIVLAALGFF. Over 944–1297 the chain is Cytoplasmic; that stretch reads YGKKRNRTLY…CSPQNGGPGH (354 aa). A Protein kinase domain is found at 979–1254; that stretch reads ISIIRELGQG…SIQEELRPSF (276 aa). ATP contacts are provided by residues 985-993 and lysine 1013; that span reads LGQGSFGMV. The Proton acceptor role is filled by aspartate 1115. Tyrosine 1145 and tyrosine 1146 each carry phosphotyrosine; by autocatalysis. The tract at residues 1267 to 1297 is disordered; sequence GARGSLPTTDAEPDSSPTPRDCSPQNGGPGH. Polar residues predominate over residues 1281–1297; it reads SSPTPRDCSPQNGGPGH.

Belongs to the protein kinase superfamily. Tyr protein kinase family. Insulin receptor subfamily. In terms of assembly, probable tetramer of 2 alpha and 2 beta chains linked by disulfide bonds. The alpha chains contribute to the formation of the ligand-binding domain, while the beta chains carry the kinase domain. Post-translationally, autophosphorylated on tyrosine residues between pH 7.9 and pH 10.5.

The protein localises to the membrane. It carries out the reaction L-tyrosyl-[protein] + ATP = O-phospho-L-tyrosyl-[protein] + ADP + H(+). In terms of biological role, receptor with tyrosine-protein kinase activity. Functions as a pH sensing receptor which is activated by increased extracellular pH. Activates an intracellular signaling pathway that involves IRS1 and AKT1/PKB. The chain is Insulin receptor-related protein (INSRR) from Homo sapiens (Human).